We begin with the raw amino-acid sequence, 350 residues long: Dihydroorotate dehydrogenase (quinone) (350 aa).

Residues 67 to 71 and Gly-91 contribute to the FMN site; that span reads AGFDK. A substrate-binding site is contributed by Lys-71. 116–120 lines the substrate pocket; the sequence is NRMGF. Residues Asn-144 and Asn-177 each contribute to the FMN site. Asn-177 contacts substrate. Ser-180 serves as the catalytic Nucleophile. Asn-182 is a substrate binding site. FMN-binding residues include Lys-213 and Thr-241. 242 to 243 is a substrate binding site; that stretch reads NT. Positions 249-268 are disordered; the sequence is ASLHSDAADEEGGLSGAPIT. FMN-binding positions include Gly-264, Gly-291, and 312 to 313; that span reads YT.

This sequence belongs to the dihydroorotate dehydrogenase family. Type 2 subfamily. In terms of assembly, monomer. It depends on FMN as a cofactor.

It localises to the cell membrane. The enzyme catalyses (S)-dihydroorotate + a quinone = orotate + a quinol. It participates in pyrimidine metabolism; UMP biosynthesis via de novo pathway; orotate from (S)-dihydroorotate (quinone route): step 1/1. Its function is as follows. Catalyzes the conversion of dihydroorotate to orotate with quinone as electron acceptor. In Natronomonas pharaonis (strain ATCC 35678 / DSM 2160 / CIP 103997 / JCM 8858 / NBRC 14720 / NCIMB 2260 / Gabara) (Halobacterium pharaonis), this protein is Dihydroorotate dehydrogenase (quinone).